Consider the following 508-residue polypeptide: Flavonoid 3',5'-hydroxylase 2 (508 aa).

C443 contributes to the heme binding site.

It belongs to the cytochrome P450 family. Requires heme as cofactor. As to expression, flowers.

Its subcellular location is the microsome. It is found in the endoplasmic reticulum. It carries out the reaction a 3',5'-unsubstituted flavanone + 2 reduced [NADPH--hemoprotein reductase] + 2 O2 = a 3',5'-dihydroxyflavanone + 2 oxidized [NADPH--hemoprotein reductase] + 2 H2O + 2 H(+). It functions in the pathway pigment biosynthesis; anthocyanin biosynthesis. In terms of biological role, catalyzes the 3'5'-hydroxylation of naringenin and eriodictyol to form 5,7,3,'4',5'-pentahydroxyflavanone and 3',5'-hydroxylation of dihydrokaempferol and dihydroquercetin to form dihydromyricetin. This Petunia hybrida (Petunia) protein is Flavonoid 3',5'-hydroxylase 2 (CYP75A3).